Reading from the N-terminus, the 501-residue chain is HMG-box protein STE11 (501 aa).

A compositionally biased stretch (polar residues) spans 142 to 153 (PVNMVGSLSGSP). Disordered regions lie at residues 142 to 205 (PVNM…KRPL) and 246 to 293 (YAEM…SLEQ). Positions 192–204 (SRSGSSSSGIKRP) are enriched in low complexity. Residues 201–265 (IKRPLNSFML…RHAKEYPDYK (65 aa)) constitute a DNA-binding region (HMG box). The span at 246 to 263 (YAEMAQRERERHAKEYPD) shows a compositional bias: basic and acidic residues.

Post-translationally, phosphorylated by MAPK2.

Its subcellular location is the nucleus. The polypeptide is HMG-box protein STE11 (Pneumocystis carinii).